Consider the following 122-residue polypeptide: Small ribosomal subunit protein uS13 (122 aa).

Residues 95–122 (GLPVRGQRTKTNARTRKGPKKTIAGKKK) form a disordered region.

It belongs to the universal ribosomal protein uS13 family. As to quaternary structure, part of the 30S ribosomal subunit. Forms a loose heterodimer with protein S19. Forms two bridges to the 50S subunit in the 70S ribosome.

Located at the top of the head of the 30S subunit, it contacts several helices of the 16S rRNA. In the 70S ribosome it contacts the 23S rRNA (bridge B1a) and protein L5 of the 50S subunit (bridge B1b), connecting the 2 subunits; these bridges are implicated in subunit movement. Contacts the tRNAs in the A and P-sites. This is Small ribosomal subunit protein uS13 from Corynebacterium glutamicum (strain ATCC 13032 / DSM 20300 / JCM 1318 / BCRC 11384 / CCUG 27702 / LMG 3730 / NBRC 12168 / NCIMB 10025 / NRRL B-2784 / 534).